Here is a 2282-residue protein sequence, read N- to C-terminus: Acetyl-CoA carboxylase (2282 aa).

In terms of domain architecture, Biotin carboxylation spans 16 to 515 (NIEKILIANN…HTGWLDQLIS (500 aa)). Residues 170-360 (YSECNGVPSE…LPATQLQIAM (191 aa)) enclose the ATP-grasp domain. Residue 196-253 (AQRVGFPAMIKASEGGGGKGIRKVTSMEDLESSFRQVQNEVPGSPIFFMKLVSNARHL) coordinates ATP. 3 residues coordinate Mn(2+): Glu319, Glu331, and Asn333. Residue Arg335 is part of the active site. The Biotinyl-binding domain maps to 646–720 (FSQEYDPSIL…APGAIIANLE (75 aa)). Lys687 carries the N6-biotinyllysine modification. Residues 1109–1129 (GSNSGSPTYGSPLIRSISSSG) are compositionally biased toward low complexity. Residues 1109–1141 (GSNSGSPTYGSPLIRSISSSGGSSGGSGFQISP) are disordered. The CoA carboxyltransferase N-terminal domain maps to 1495–1851 (PYPIMDAVQR…SGGEMVPIIS (357 aa)). A carboxyltransferase region spans residues 1495-2178 (PYPIMDAVQR…EEDKLKLIDK (684 aa)). CoA is bound by residues Arg1761, Lys2068, and Arg2070. One can recognise a CoA carboxyltransferase C-terminal domain in the interval 1852-2178 (PIDSPHRDIE…EEDKLKLIDK (327 aa)).

Biotin serves as cofactor. The cofactor is Mn(2+).

It is found in the cytoplasm. It catalyses the reaction hydrogencarbonate + acetyl-CoA + ATP = malonyl-CoA + ADP + phosphate + H(+). The catalysed reaction is N(6)-biotinyl-L-lysyl-[protein] + hydrogencarbonate + ATP = N(6)-carboxybiotinyl-L-lysyl-[protein] + ADP + phosphate + H(+). Its pathway is lipid metabolism; malonyl-CoA biosynthesis; malonyl-CoA from acetyl-CoA: step 1/1. Functionally, catalyzes the rate-limiting reaction in the biogenesis of long-chain fatty acids. Carries out three functions: biotin carboxyl carrier protein, biotin carboxylase and carboxyltransferase. The polypeptide is Acetyl-CoA carboxylase (accA) (Dictyostelium discoideum (Social amoeba)).